Here is a 153-residue protein sequence, read N- to C-terminus: uncharacterized protein (153 aa).

The interval I17 to N78 is disordered. Residues P22–P38 are compositionally biased toward basic residues.

This is an uncharacterized protein from Saccharomyces cerevisiae (strain ATCC 204508 / S288c) (Baker's yeast).